Here is a 201-residue protein sequence, read N- to C-terminus: Phosphatidylglycerophosphatase and protein-tyrosine phosphatase 1 (201 aa).

Residues 1 to 27 (MAATALLEAGLARVLFYPTLLYTLFRG) constitute a mitochondrion transit peptide. The Tyrosine-protein phosphatase domain occupies 37-188 (WYHRIDPTVL…LKEFHKQITA (152 aa)). Catalysis depends on cysteine 132, which acts as the Phosphocysteine intermediate.

This sequence belongs to the protein-tyrosine phosphatase family. Non-receptor class dual specificity subfamily. In terms of assembly, interacts with STYXL1; the interaction inhibits PTPMT1 catalytic activity.

The protein localises to the mitochondrion inner membrane. The enzyme catalyses a 1,2-diacyl-sn-glycero-3-phospho-(1'-sn-glycero-3'-phosphate) + H2O = a 1,2-diacyl-sn-glycero-3-phospho-(1'-sn-glycerol) + phosphate. It carries out the reaction O-phospho-L-tyrosyl-[protein] + H2O = L-tyrosyl-[protein] + phosphate. It catalyses the reaction O-phospho-L-seryl-[protein] + H2O = L-seryl-[protein] + phosphate. The catalysed reaction is O-phospho-L-threonyl-[protein] + H2O = L-threonyl-[protein] + phosphate. The enzyme catalyses 1,2-di-(9Z-octadecenoyl)-sn-glycero-3-phospho-(1'-sn-glycerol-3'-phosphate) + H2O = 1,2-di-(9Z-octadecenoyl)-sn-glycero-3-phospho-(1'-sn-glycerol) + phosphate. It carries out the reaction 1,2-dioctanoyl-sn-glycero-3-phospho-(1D-myo-inositol-5-phosphate) + H2O = 1,2-dioctanoyl-sn-glycero-3-phospho-(1D-myo-inositol) + phosphate. It catalyses the reaction a 1-acyl-2-hexanoyl-sn-glycero-3-phospho-(1D-myo-inositol-5-phosphate) + H2O = a 1-acyl-2-hexanoyl-sn-glycero-3-phospho-(1D-myo-inositol) + phosphate. The catalysed reaction is 1,2-dibutyryl-sn-glycero-3-phospho-(1D-myo-inositol-5-phosphate) + H2O = 1,2-dibutyryl-sn-glycero-3-phospho-(1D-myo-inositol) + phosphate. It functions in the pathway phospholipid metabolism; phosphatidylglycerol biosynthesis; phosphatidylglycerol from CDP-diacylglycerol: step 2/2. Its function is as follows. Lipid phosphatase which dephosphorylates phosphatidylglycerophosphate (PGP) to phosphatidylglycerol (PG). PGP is an essential intermediate in the biosynthetic pathway of cardiolipin, a mitochondrial-specific phospholipid regulating the membrane integrity and activities of the organelle. Has also been shown to display phosphatase activity toward phosphoprotein substrates, specifically mediates dephosphorylation of mitochondrial proteins, thereby playing an essential role in ATP production. Has probably a preference for proteins phosphorylated on Ser and/or Thr residues compared to proteins phosphorylated on Tyr residues. Probably involved in regulation of insulin secretion in pancreatic beta cells. May prevent intrinsic apoptosis, probably by regulating mitochondrial membrane integrity. The chain is Phosphatidylglycerophosphatase and protein-tyrosine phosphatase 1 from Homo sapiens (Human).